The chain runs to 492 residues: Glutamyl-tRNA(Gln) amidotransferase subunit A (492 aa).

Active-site charge relay system residues include lysine 77 and serine 152. The active-site Acyl-ester intermediate is serine 176.

Belongs to the amidase family. GatA subfamily. In terms of assembly, heterotrimer of A, B and C subunits.

The enzyme catalyses L-glutamyl-tRNA(Gln) + L-glutamine + ATP + H2O = L-glutaminyl-tRNA(Gln) + L-glutamate + ADP + phosphate + H(+). Functionally, allows the formation of correctly charged Gln-tRNA(Gln) through the transamidation of misacylated Glu-tRNA(Gln) in organisms which lack glutaminyl-tRNA synthetase. The reaction takes place in the presence of glutamine and ATP through an activated gamma-phospho-Glu-tRNA(Gln). The polypeptide is Glutamyl-tRNA(Gln) amidotransferase subunit A (gatA) (Chlamydia pneumoniae (Chlamydophila pneumoniae)).